We begin with the raw amino-acid sequence, 235 residues long: Ribitol-5-phosphate cytidylyltransferase (235 aa).

CTP is bound by residues 7 to 10 (LAGG), 82 to 88 (GADRNTS), and S113.

Belongs to the IspD/TarI cytidylyltransferase family. TarI subfamily.

The catalysed reaction is D-ribitol 5-phosphate + CTP + H(+) = CDP-L-ribitol + diphosphate. The protein operates within cell wall biogenesis; poly(ribitol phosphate) teichoic acid biosynthesis. Functionally, catalyzes the transfer of the cytidylyl group of CTP to D-ribitol 5-phosphate. This is Ribitol-5-phosphate cytidylyltransferase from Streptococcus pneumoniae serotype 19F (strain G54).